The chain runs to 463 residues: Cysteine--tRNA ligase (463 aa).

Position 27 (Cys-27) interacts with Zn(2+). The short motif at 29–39 (ATVQGLPHIGH) is the 'HIGH' region element. Zn(2+) is bound by residues Cys-205, His-230, and Glu-234. Positions 261 to 265 (KMSKS) match the 'KMSKS' region motif. ATP is bound at residue Lys-264.

The protein belongs to the class-I aminoacyl-tRNA synthetase family. In terms of assembly, monomer. Zn(2+) is required as a cofactor.

The protein resides in the cytoplasm. The catalysed reaction is tRNA(Cys) + L-cysteine + ATP = L-cysteinyl-tRNA(Cys) + AMP + diphosphate. This Mycolicibacterium vanbaalenii (strain DSM 7251 / JCM 13017 / BCRC 16820 / KCTC 9966 / NRRL B-24157 / PYR-1) (Mycobacterium vanbaalenii) protein is Cysteine--tRNA ligase.